A 263-amino-acid chain; its full sequence is Endonuclease 8 (263 aa).

Catalysis depends on Pro-2, which acts as the Schiff-base intermediate with DNA. Glu-3 serves as the catalytic Proton donor. The active-site Proton donor; for beta-elimination activity is the Lys-53. Positions 70, 125, and 169 each coordinate DNA. The FPG-type zinc-finger motif lies at 229 to 263 (KVFHRDGELCERCGGIIEKTTLSSRPFYWCPGCQH). The active-site Proton donor; for delta-elimination activity is the Arg-253.

Belongs to the FPG family. Zn(2+) is required as a cofactor.

The catalysed reaction is 2'-deoxyribonucleotide-(2'-deoxyribose 5'-phosphate)-2'-deoxyribonucleotide-DNA = a 3'-end 2'-deoxyribonucleotide-(2,3-dehydro-2,3-deoxyribose 5'-phosphate)-DNA + a 5'-end 5'-phospho-2'-deoxyribonucleoside-DNA + H(+). Involved in base excision repair of DNA damaged by oxidation or by mutagenic agents. Acts as a DNA glycosylase that recognizes and removes damaged bases. Has a preference for oxidized pyrimidines, such as thymine glycol, 5,6-dihydrouracil and 5,6-dihydrothymine. Has AP (apurinic/apyrimidinic) lyase activity and introduces nicks in the DNA strand. Cleaves the DNA backbone by beta-delta elimination to generate a single-strand break at the site of the removed base with both 3'- and 5'-phosphates. The sequence is that of Endonuclease 8 from Escherichia coli O157:H7.